The following is a 1024-amino-acid chain: Protein tiptop (1024 aa).

The segment covering 20–35 (ELTSPRCQSRDSNTSA) has biased composition (polar residues). Disordered stretches follow at residues 20–40 (ELTSPRCQSRDSNTSAGAGAG) and 138–215 (EGEV…ISAD). Positions 159–175 (DDQEEDQEQDQEQEQEQ) are enriched in acidic residues. The segment at 317 to 341 (FKCVWCKQSFSTLANLTAHMKETQH) adopts a C2H2-type 1 zinc-finger fold. A disordered region spans residues 350 to 392 (LPTGGVGTPSAPPPTRLATSASNSACSSSSSSTSSSSNSSKSE). Over residues 368–391 (TSASNSACSSSSSSTSSSSNSSKS) the composition is skewed to low complexity. The segment at 426-450 (LKCMWCGQSFRSLAEMTSHMQETQH) adopts a C2H2-type 2 zinc-finger fold. Disordered regions lie at residues 466 to 489 (GDERERPTNTGVPSTSTAAPSSPS), 519 to 576 (AQKS…SLDS), 712 to 759 (SRDR…IKAE), 786 to 818 (FSMEACRESPRSVSKSPAPQTERSPPDNGSLLA), and 868 to 891 (ETTDPPSTGLRSASSAGSSTASAT). The span at 477–489 (VPSTSTAAPSSPS) shows a compositional bias: low complexity. A C2H2-type 3 zinc finger spans residues 499-523 (LTCKVCDQAFGSLKELSTHMAQKSH). A compositionally biased stretch (low complexity) spans 527 to 537 (SPAPSASPPAA). Over residues 543-558 (KRGRQNRNEKRKKSLP) the composition is skewed to basic residues. A compositionally biased stretch (low complexity) spans 718-729 (SESSSASRVESS). Residues 745 to 755 (TPAPPPPPPPT) are compositionally biased toward pro residues. Residues 786-795 (FSMEACRESP) are compositionally biased toward basic and acidic residues. Polar residues predominate over residues 796–808 (RSVSKSPAPQTER). A compositionally biased stretch (low complexity) spans 874 to 891 (STGLRSASSAGSSTASAT). Residues 926 to 949 (IKCSYCDTPFASKGAYRHHLSKVH) form a C2H2-type 4 zinc finger. Residues 954–1004 (AGEDSPRLKSPAVQSPRSMPLASPRRSASRSPATGSQQPPPSPTISPYDES) form a disordered region. Residues 968–990 (SPRSMPLASPRRSASRSPATGSQ) are compositionally biased toward low complexity.

This sequence belongs to the teashirt C2H2-type zinc-finger protein family. In terms of tissue distribution, expression in the Malpighian tubules (MTs) and stomatogastric nervous system starts at embryonic stage 10. At stage 11, expression in the head domain is initiated in the clypeolabrum in two bilaterally symmetric clusters of cells. At stage 12, expression appears in the central nervous system (CNS) of the trunk and the epidermis. The staining in the hindgut is maintained throughout embryogenesis. At stage 13, expression is present in elongating MTs. The anterior staining is detected in cells that invaginate into the stomodeum and by stage 15 onwards, in cells close to the pharynx. Also expressed in cells of the brain, the second constriction of the gut, the trunk epidermis, the anterior segments of the CNS (the three thoracic and the first two abdominal segments) and in the MTs. From stage 12 onwards, tsh and tio are colocalized in some cells.

Its subcellular location is the nucleus. In terms of biological role, tiptop (tio) and teashirt (tsh) have, on the whole, common activities. Tio and tsh repress each other's expression and tsh has a crucial role for trunk patterning that is in part masked by ectopic expression of tiptop. Both genes share a common activity required for the activation of Ser and svb and the maintenance of en and wg. This is Protein tiptop (tio) from Drosophila melanogaster (Fruit fly).